The primary structure comprises 286 residues: Ribosomal RNA small subunit methyltransferase H (286 aa).

Residues glycine 25–histidine 27, aspartate 45, leucine 79, aspartate 93, and glutamine 100 each bind S-adenosyl-L-methionine.

It belongs to the methyltransferase superfamily. RsmH family.

Its subcellular location is the cytoplasm. It carries out the reaction cytidine(1402) in 16S rRNA + S-adenosyl-L-methionine = N(4)-methylcytidine(1402) in 16S rRNA + S-adenosyl-L-homocysteine + H(+). Its function is as follows. Specifically methylates the N4 position of cytidine in position 1402 (C1402) of 16S rRNA. The protein is Ribosomal RNA small subunit methyltransferase H of Petrotoga mobilis (strain DSM 10674 / SJ95).